A 33-amino-acid polypeptide reads, in one-letter code: Brevinin-2DYd (33 aa).

A disulfide bridge connects residues Cys-27 and Cys-33.

As to expression, expressed by the skin glands.

Its subcellular location is the secreted. In terms of biological role, antimicrobial peptide. A mixture of Brevinin-2DYc/2DYd is active against the Gram-positive bacterium S.aureus (MIC=15 uM) and the Gram-negative bacterium E.coli (MIC=15 uM). The sequence is that of Brevinin-2DYd from Rana dybowskii (Dybovsky's frog).